The primary structure comprises 304 residues: Quinolinate synthase (304 aa).

Residues His-24 and Ser-41 each coordinate iminosuccinate. Cys-86 is a binding site for [4Fe-4S] cluster. Residues 112 to 114 and Ser-129 each bind iminosuccinate; that span reads YVN. Cys-171 lines the [4Fe-4S] cluster pocket. Residues 197–199 and Thr-214 contribute to the iminosuccinate site; that span reads HPE. Cys-259 is a binding site for [4Fe-4S] cluster.

It belongs to the quinolinate synthase family. Type 2 subfamily. The cofactor is [4Fe-4S] cluster.

It localises to the cytoplasm. It carries out the reaction iminosuccinate + dihydroxyacetone phosphate = quinolinate + phosphate + 2 H2O + H(+). It functions in the pathway cofactor biosynthesis; NAD(+) biosynthesis; quinolinate from iminoaspartate: step 1/1. Functionally, catalyzes the condensation of iminoaspartate with dihydroxyacetone phosphate to form quinolinate. The polypeptide is Quinolinate synthase (Methanosarcina barkeri (strain Fusaro / DSM 804)).